Here is a 328-residue protein sequence, read N- to C-terminus: Stress response kinase A (328 aa).

The active-site Proton acceptor is the D201. Positions 206 and 217 each coordinate Mg(2+). Residue D217 is part of the active site.

The protein belongs to the SrkA/RdoA protein kinase family. In terms of assembly, monomer. It depends on Mg(2+) as a cofactor.

The protein localises to the cytoplasm. The catalysed reaction is L-seryl-[protein] + ATP = O-phospho-L-seryl-[protein] + ADP + H(+). It carries out the reaction L-threonyl-[protein] + ATP = O-phospho-L-threonyl-[protein] + ADP + H(+). In terms of biological role, a protein kinase that phosphorylates Ser and Thr residues. Probably acts to suppress the effects of stress linked to accumulation of reactive oxygen species. Probably involved in the extracytoplasmic stress response. The chain is Stress response kinase A from Salmonella choleraesuis (strain SC-B67).